The following is an 801-amino-acid chain: Interleukin-4 receptor subunit alpha (801 aa).

A signal peptide spans 1–25 (MGWLCTKFLSSVSCLILLWVTGSGG). Over 26-232 (IKVLGDPTCF…NHFQLPLLQR (207 aa)) the chain is Extracellular. A disulfide bridge links Cys-34 with Cys-44. An N-linked (GlcNAc...) asparagine glycan is attached at Asn-71. Residues Cys-74 and Cys-86 are joined by a disulfide bond. Residues 125–223 (APDNLTLHTN…EWSPSITWYN (99 aa)) enclose the Fibronectin type-III domain. 3 N-linked (GlcNAc...) asparagine glycosylation sites follow: Asn-128, Asn-134, and Asn-162. Residue Ser-164 is modified to Phosphoserine. N-linked (GlcNAc...) asparagine glycosylation is present at Asn-176. The short motif at 212 to 216 (WSEWS) is the WSXWS motif element. Residues 233–256 (LPLGVSISCICILLFCLTCYFSII) form a helical membrane-spanning segment. Topologically, residues 257–801 (KIKKIWWDQI…PVGTLGVTVS (545 aa)) are cytoplasmic. The short motif at 262–270 (WWDQIPTPA) is the Box 1 motif element. The tract at residues 424–476 (VGQSSMAESSSLLPSESGQASTSWACFPTGPSETTCQVTGQQPPHPDPERATG) is disordered. Positions 426–444 (QSSMAESSSLLPSESGQAS) are enriched in low complexity. The required for IRS1 activation and IL4-induced cell growth stretch occupies residues 439-549 (ESGQASTSWA…ESWEQILHMS (111 aa)). Polar residues predominate over residues 454 to 465 (PSETTCQVTGQQ). Position 492 is a phosphotyrosine (Tyr-492). Residues 493–515 (RSFSDFSSPAPNPGELASEQKQA) are disordered. Positions 549–644 (SVLQHGTAGS…NSMPLFTFGL (96 aa)) are required for IL4-induced gene expression. Residues Tyr-566, Tyr-594, and Tyr-622 each carry the phosphotyrosine modification. The short motif at 698–703 (IVYSSL) is the ITIM motif element. The disordered stretch occupies residues 767–801 (RTPSNLSGVGKGPGHSPVPSQTTEVPVGTLGVTVS).

The protein belongs to the type I cytokine receptor family. Type 4 subfamily. The functional IL4 receptor is formed by initial binding of IL4 to IL4R. Subsequent recruitment to the complex of the common gamma chain, in immune cells, creates a type I receptor and, in non-immune cells, of IL13RA1 forms a type II receptor. IL4R can also interact with the IL13/IL13RA1 complex to form a similar type II receptor. Interacts with PIK3C3. Interacts with the SH2-containing phosphatases, PTPN6/SHIP1, PTPN11/SHIP2 and INPP5D/SHIP. Interacts with JAK1 through a Box 1-containing region; inhibited by SOCS5. Interacts with SOCS5; inhibits IL4 signaling. Interacts with JAK3. Interacts with CLM1. Interacts with IL13RA2. Post-translationally, on IL4 binding, phosphorylated on C-terminal tyrosine residues. Isoform 2 is expressed in kidney, spleen, lung and liver.

The protein localises to the cell membrane. It is found in the secreted. Its function is as follows. Receptor for both interleukin 4 and interleukin 13. Couples to the JAK1/2/3-STAT6 pathway. The IL4 response is involved in promoting Th2 differentiation. The IL4/IL13 responses are involved in regulating IgE production and, chemokine and mucus production at sites of allergic inflammation. In certain cell types, can signal through activation of insulin receptor substrates, IRS1/IRS2. Isoform 2 (soluble form) inhibits IL4-induced spleen cell proliferation. This Rattus norvegicus (Rat) protein is Interleukin-4 receptor subunit alpha (Il4r).